The following is a 409-amino-acid chain: Immediate early response gene 5-like protein (409 aa).

2 disordered regions span residues 168 to 237 (QPPH…PSSS) and 312 to 335 (GQEE…GGTP). Residues 184–195 (QPGPAPLPPPAP) show a composition bias toward pro residues. Composition is skewed to low complexity over residues 196 to 212 (AALC…CSAP) and 220 to 237 (PPTV…PSSS). The segment covering 313-324 (QEEEDDEEEDAG) has biased composition (acidic residues).

This sequence belongs to the IER family.

This is Immediate early response gene 5-like protein (Ier5l) from Rattus norvegicus (Rat).